We begin with the raw amino-acid sequence, 178 residues long: Ribosomal RNA small subunit methyltransferase G (178 aa).

Residues glycine 54, leucine 59, 105-106, and arginine 120 contribute to the S-adenosyl-L-methionine site; that span reads LE.

Belongs to the methyltransferase superfamily. RNA methyltransferase RsmG family.

It is found in the cytoplasm. It catalyses the reaction guanosine(527) in 16S rRNA + S-adenosyl-L-methionine = N(7)-methylguanosine(527) in 16S rRNA + S-adenosyl-L-homocysteine. Its function is as follows. Specifically methylates the N7 position of guanine in position 527 of 16S rRNA. This is Ribosomal RNA small subunit methyltransferase G from Helicobacter pylori (strain HPAG1).